The following is a 122-amino-acid chain: Ribosome-binding factor A (122 aa).

This sequence belongs to the RbfA family. In terms of assembly, monomer. Binds 30S ribosomal subunits, but not 50S ribosomal subunits or 70S ribosomes.

It localises to the cytoplasm. One of several proteins that assist in the late maturation steps of the functional core of the 30S ribosomal subunit. Associates with free 30S ribosomal subunits (but not with 30S subunits that are part of 70S ribosomes or polysomes). Required for efficient processing of 16S rRNA. May interact with the 5'-terminal helix region of 16S rRNA. The polypeptide is Ribosome-binding factor A (Streptococcus agalactiae serotype III (strain NEM316)).